A 148-amino-acid polypeptide reads, in one-letter code: uncharacterized protein (148 aa).

Residues 3-64 (LDALDRKILE…KLNYESIGYD (62 aa)) form the HTH asnC-type domain. Residues 22-41 (YREIAKDLNVAVGTIYNRIK) constitute a DNA-binding region (H-T-H motif).

This is an uncharacterized protein from Pyrococcus horikoshii (strain ATCC 700860 / DSM 12428 / JCM 9974 / NBRC 100139 / OT-3).